We begin with the raw amino-acid sequence, 321 residues long: Glycolipid transfer protein domain-containing protein 2 (321 aa).

It belongs to the GLTP family.

This Mus musculus (Mouse) protein is Glycolipid transfer protein domain-containing protein 2 (Gltpd2).